The sequence spans 388 residues: Ribonucleoside-diphosphate reductase subunit beta (388 aa).

Fe cation is bound by residues D84, E115, and H118. Y122 is a catalytic residue. Positions 212, 247, and 250 each coordinate Fe cation.

This sequence belongs to the ribonucleoside diphosphate reductase small chain family. Heterodimer of a large and a small subunit. It depends on Fe cation as a cofactor.

It catalyses the reaction a 2'-deoxyribonucleoside 5'-diphosphate + [thioredoxin]-disulfide + H2O = a ribonucleoside 5'-diphosphate + [thioredoxin]-dithiol. Its function is as follows. Provides the precursors necessary for DNA synthesis. Catalyzes the biosynthesis of deoxyribonucleotides from the corresponding ribonucleotides. In Escherichia coli (Bacteriophage T4), this protein is Ribonucleoside-diphosphate reductase subunit beta (NRDB).